The primary structure comprises 470 residues: MAAAAAAASVASQAQAVLRGRLCDQAVVHSALRSSPDTNYSKLKYLVASSVSEACNNSVLLLGPRGCGKAAVRFSFLVYSSAPLSAVFSDAGVVFDEMCQWAIYDFTLWVVSAWTEVVDMVLDDLKKDHPDAISVIRLNGMLHSDDNCATKEIARQLCLEHQLSFSKMASSDDNTEFMIDMLRECGLAHKTIIFVLEEFDLFAQGKQRLLYSLLDAMQSLTSQAVVIGVSCRLDADQLLEKRVRSRFSHRKLLFVPSSVDSLQRLMEHLLALPEDSPLPTKYVREYNARITSIFNDKKFKGILSSLTDADATTSHILRFLFRVVSYMDIDSGLLSMQSFMNALSSMQRQPKMDSLQDLSILELYILVCMNRLEDKEKSSYNFITIMKEYKSVQDAYKTSDKYSHTVCFRAFEHLLDRELISFADNKGRNQALEYRPVKLLISSRELAESLKLNTTCPAVLQKLLDRERYM.

Residue 63–70 (GPRGCGKA) coordinates ATP.

It belongs to the ORC4 family. In terms of assembly, component of the origin recognition complex (ORC) composed of at least ORC1, ORC2, ORC3, ORC4, ORC5 and ORC6. ORC is regulated in a cell-cycle and development dependent manner. It is sequentially assembled at the exit from anaphase of mitosis and disassembled as cells enter S phase. In terms of tissue distribution, expressed in the shoot apical meristem (SAM), leaves, ears and roots (including root tips).

It localises to the nucleus. Its function is as follows. Component of the origin recognition complex (ORC) that binds origins of replication. DNA-binding is ATP-dependent. The specific DNA sequences that define origins of replication have not been identified yet. ORC is required to assemble the pre-replication complex necessary to initiate DNA replication. This is Origin of replication complex subunit 4 from Oryza sativa subsp. japonica (Rice).